The chain runs to 300 residues: GTPase Era (300 aa).

Residues 4–172 (KSGFVALIGR…LEKIKKLLPE (169 aa)) form the Era-type G domain. The segment at 12–19 (GRPNVGKS) is G1. 12-19 (GRPNVGKS) is a binding site for GTP. Positions 38–42 (QTTRN) are G2. The tract at residues 59-62 (DTPG) is G3. GTP is bound by residues 59–63 (DTPGV) and 122–125 (NKAD). Positions 122-125 (NKAD) are G4. The G5 stretch occupies residues 151–153 (IAA). Positions 195-281 (IREKILLNLS…NLQLWVKVKK (87 aa)) constitute a KH type-2 domain.

The protein belongs to the TRAFAC class TrmE-Era-EngA-EngB-Septin-like GTPase superfamily. Era GTPase family. As to quaternary structure, monomer.

The protein localises to the cytoplasm. It is found in the cell membrane. In terms of biological role, an essential GTPase that binds both GDP and GTP, with rapid nucleotide exchange. Plays a role in 16S rRNA processing and 30S ribosomal subunit biogenesis and possibly also in cell cycle regulation and energy metabolism. This Caldicellulosiruptor saccharolyticus (strain ATCC 43494 / DSM 8903 / Tp8T 6331) protein is GTPase Era.